The sequence spans 378 residues: Ribosomal RNA large subunit methyltransferase G (378 aa).

The protein belongs to the methyltransferase superfamily. RlmG family.

It is found in the cytoplasm. It catalyses the reaction guanosine(1835) in 23S rRNA + S-adenosyl-L-methionine = N(2)-methylguanosine(1835) in 23S rRNA + S-adenosyl-L-homocysteine + H(+). Its function is as follows. Specifically methylates the guanine in position 1835 (m2G1835) of 23S rRNA. In Salmonella gallinarum (strain 287/91 / NCTC 13346), this protein is Ribosomal RNA large subunit methyltransferase G.